The following is a 277-amino-acid chain: MAKPTSRNDRFALFFITLIFLILTVSKPVASQNCGCASDFCCSKYGYCGTTDEFCGEGCQAGPCRSSGGGGDPAVSLEGTVTPDFFNSILNQRGDCPGKGFYTHDTFMAAANSYPSFGASISKREIAAFFAHVAQETGFMCYIEEIDGPAKAASGEYCDTEKPEFPCAQGKGYYGRGAIQLSWNYNYGLCGKALDENLLASPEKVAQDQVLAFKTAFWFWTTNVRTSFKSGFGATIRAVNSRECSGGDSTAKAANRIKYFQDYCGKLGVAPGDNLTC.

The signal sequence occupies residues 1 to 31; the sequence is MAKPTSRNDRFALFFITLIFLILTVSKPVAS. Residues 32–66 enclose the Chitin-binding type-1 domain; the sequence is QNCGCASDFCCSKYGYCGTTDEFCGEGCQAGPCRS. Disulfide bonds link cysteine 34/cysteine 42, cysteine 36/cysteine 48, cysteine 41/cysteine 55, and cysteine 59/cysteine 64. The catalytic stretch occupies residues 75–277; the sequence is VSLEGTVTPD…GVAPGDNLTC (203 aa). Residue glutamate 136 is the Proton donor of the active site. Asparagine 274 carries an N-linked (GlcNAc...) asparagine glycan.

It belongs to the glycosyl hydrolase 19 family. Chitinase class I subfamily.

It carries out the reaction Random endo-hydrolysis of N-acetyl-beta-D-glucosaminide (1-&gt;4)-beta-linkages in chitin and chitodextrins.. The chain is Endochitinase CHI from Arabidopsis thaliana (Mouse-ear cress).